We begin with the raw amino-acid sequence, 1205 residues long: Chromosome partition protein Smc (1205 aa).

Pro-32–Asn-39 is an ATP binding site. 2 coiled-coil regions span residues Lys-169 to His-288 and Glu-330 to Arg-499. The region spanning Gly-514–Leu-628 is the SMC hinge domain. Coiled-coil stretches lie at residues Leu-661–Thr-771, Ala-802–Gln-836, and Asp-979–Leu-1033.

The protein belongs to the SMC family. Homodimer.

It is found in the cytoplasm. Functionally, required for chromosome condensation and partitioning. This is Chromosome partition protein Smc from Mycobacterium tuberculosis (strain ATCC 25618 / H37Rv).